A 557-amino-acid chain; its full sequence is Probable WRKY transcription factor 20 (557 aa).

Basic and acidic residues predominate over residues 1 to 12; sequence MNPQANDRKEFQ. Disordered regions lie at residues 1-36 and 76-215; these read MNPQ…GGGA and KPEP…DGYN. Residues 95–114 are compositionally biased toward polar residues; sequence SASSSSYTGRGFHQNTFTEQ. The segment covering 151–169 has biased composition (low complexity); the sequence is SSHSPSSISDAAGSSSELS. A compositionally biased stretch (polar residues) spans 193–207; the sequence is SIQTSQNDSRGSTPS. The segment at residues 205 to 269 is a DNA-binding region (WRKY 1); it reads TPSILADDGY…YKGTHDHPKP (65 aa). Residues C236, C241, H264, and H266 each contribute to the Zn(2+) site. Positions 257-348 are disordered; that stretch reads DIIYKGTHDH…PDDDDPFSKR (92 aa). Positions 282-299 are enriched in basic and acidic residues; the sequence is QEERLDKYPSSTGRDEKG. The span at 303-314 shows a compositional bias: polar residues; sequence YNLSNPNEQTGN. Residues 321–332 are compositionally biased toward low complexity; the sequence is SASDDGGEAAAS. A DNA-binding region (WRKY 2) is located at residues 375–440; that stretch reads SEVDILDDGY…YEGKHDHDVP (66 aa). Residues C406, C411, H435, and H437 each coordinate Zn(2+). Disordered stretches follow at residues 433–486 and 520–557; these read GKHD…QHQN and NQYG…QSGP. The span at 520-536 shows a compositional bias: polar residues; it reads NQYGQRETKNETQNGDI.

It belongs to the WRKY group I family.

The protein resides in the nucleus. In terms of biological role, transcription factor. Interacts specifically with the W box (5'-(T)TGAC[CT]-3'), a frequently occurring elicitor-responsive cis-acting element. The polypeptide is Probable WRKY transcription factor 20 (WRKY20) (Arabidopsis thaliana (Mouse-ear cress)).